A 676-amino-acid chain; its full sequence is Protein TAPT1 homolog (676 aa).

The interval 1 to 44 (MNATLNSAGGKRQLRFRGDVTGSRVEELHHQQQEEQKQKAPLAQ) is disordered. The span at 24-38 (RVEELHHQQQEEQKQ) shows a compositional bias: basic and acidic residues. Transmembrane regions (helical) follow at residues 128–148 (SFLYIHTFLPVRFVMAVWALV), 170–190 (EICDLLKGVIWMTVTLIMLLV), 249–269 (VLTHVLFTLIYVFLHSGLIMF), 346–366 (FCVMLPDCFAVLFTEILIDWV), 414–434 (GFIPFPLAVVLIKAIYTAVSF), and 437–457 (LAAWLLFLLAYLFAMGLRICL). The disordered stretch occupies residues 625–676 (SGDGVTSAKAKKATQRLPKRTHKRSESEPGMPSMVEKGGAAGIAGGNQTTQL). The segment covering 633-647 (KAKKATQRLPKRTHK) has biased composition (basic residues).

Belongs to the TAPT1 family.

It is found in the membrane. This Drosophila melanogaster (Fruit fly) protein is Protein TAPT1 homolog.